A 24-amino-acid polypeptide reads, in one-letter code: Poly-His-poly-Gly peptide 1 (24 aa).

Basic residues predominate over residues 1–13 (EDDHHHHHHHHHG). Positions 1 to 24 (EDDHHHHHHHHHGVGGGGGGGGGG) are disordered. The segment covering 14-24 (VGGGGGGGGGG) has biased composition (gly residues).

In terms of tissue distribution, expressed by the venom gland.

Its subcellular location is the secreted. Functionally, may serve as a metalloproteinase inhibitor during glandular storage. Their inhibition may be instantly disengaged, by dilution or physiochemical change, when venom is injected into tissue of the victim. In Atheris chlorechis (Western bush viper), this protein is Poly-His-poly-Gly peptide 1.